Consider the following 205-residue polypeptide: Phospholipase D (205 aa).

The N-terminal stretch at 1 to 22 (MKSKNNKFIAVSISFILGIALG) is a signal peptide. The region spanning 142-169 (VPGIAHNKVIIIDKKKVITGSFNFTVSA) is the PLD phosphodiesterase domain. Residues histidine 147, lysine 149, and aspartate 154 contribute to the active site.

Belongs to the phospholipase D family. In terms of assembly, homodimer.

It localises to the secreted. It carries out the reaction a 1,2-diacyl-sn-glycero-3-phosphocholine + H2O = a 1,2-diacyl-sn-glycero-3-phosphate + choline + H(+). Could be a virulence factor. In Rickettsia prowazekii (strain Madrid E), this protein is Phospholipase D (pld).